The sequence spans 222 residues: Sugar fermentation stimulation protein homolog (222 aa).

The protein belongs to the SfsA family.

The sequence is that of Sugar fermentation stimulation protein homolog from Thermotoga sp. (strain RQ2).